A 274-amino-acid chain; its full sequence is tRNA pseudouridine synthase A (274 aa).

The active-site Nucleophile is the D56. Y109 is a substrate binding site.

Belongs to the tRNA pseudouridine synthase TruA family.

The enzyme catalyses uridine(38/39/40) in tRNA = pseudouridine(38/39/40) in tRNA. Its function is as follows. Formation of pseudouridine at positions 38, 39 and 40 in the anticodon stem and loop of transfer RNAs. The polypeptide is tRNA pseudouridine synthase A (Methanosphaera stadtmanae (strain ATCC 43021 / DSM 3091 / JCM 11832 / MCB-3)).